A 784-amino-acid chain; its full sequence is Protein DBF4 homolog B (784 aa).

One can recognise a BRCT domain in the interval 27 to 117 (CREITFAGKS…SRGKQLLKKV (91 aa)). Positions 222–243 (TVKKKDPGDQEEEEGQRSQKPQ) are disordered. Residues 244-293 (ARKRKGYCECCEETFDTLSEHLVGEHHFRFVSNPLSYKMIDDLAAQLTCD) form a DBF4-type zinc finger. Residues C251, C254, H264, and H270 each coordinate Zn(2+). Disordered stretches follow at residues 299-332 (FGSPTSPEAERSSQNEDWDLDLAPGEAEPAGNEG), 348-368 (HADCEDQGAPAYLRDGGAEEP), and 495-529 (TVGSQGDVTSHSAANKPHTENCPVDSTGDRHAQPA). The span at 498 to 507 (SQGDVTSHSA) shows a compositional bias: polar residues.

As to quaternary structure, forms a complex with cdc7. Post-translationally, phosphorylated. Stably phosphorylated throughout the cell cycle.

It is found in the nucleus. Functionally, regulatory subunit for cdc7 which activates its kinase activity thereby playing a central role in DNA replication and cell proliferation. Specifically required during the initiation of DNA replication in egg and during early embryonic development. The complex cdc7-dbf4b phosphorylates mcm2 and mcm4 subunits and is required for cdc45 loading. The protein is Protein DBF4 homolog B (dbf4b) of Xenopus laevis (African clawed frog).